Consider the following 685-residue polypeptide: Augmin complex subunit dgt5 (685 aa).

Coiled coils occupy residues 87 to 165 (LQRY…NKIQ) and 342 to 379 (NMRNFNRSQNEFLREQIEQLRLELDAGAKQLENHDLKL).

In terms of assembly, component of the augmin complex composed of dgt2, dgt3, dgt4, dgt5, dgt6, msd1, msd5 and wac. The complex interacts directly or indirectly with microtubules and is required for centrosome-independent generation of spindle microtubules.

The protein resides in the cytoplasm. It is found in the cytoskeleton. It localises to the spindle. Its subcellular location is the chromosome. The protein localises to the centromere. The protein resides in the kinetochore. It is found in the microtubule organizing center. It localises to the centrosome. As part of the augmin complex, plays a role in centrosome-independent generation of spindle microtubules. The complex is required for mitotic spindle assembly through its involvement in localizing gamma-tubulin to spindle microtubules. The polypeptide is Augmin complex subunit dgt5 (Drosophila melanogaster (Fruit fly)).